Consider the following 193-residue polypeptide: Phosphoheptose isomerase (193 aa).

Residues 37–193 (LADSFKAGGK…MLIEKEMAKG (157 aa)) enclose the SIS domain. 52 to 54 (NGG) contacts substrate. Zn(2+) is bound by residues histidine 61 and glutamate 65. Substrate contacts are provided by residues glutamate 65, 93–94 (ND), 119–121 (STS), serine 124, and glutamine 172. Glutamine 172 and histidine 180 together coordinate Zn(2+).

This sequence belongs to the SIS family. GmhA subfamily. As to quaternary structure, homotetramer. Zn(2+) serves as cofactor.

The protein resides in the cytoplasm. The enzyme catalyses 2 D-sedoheptulose 7-phosphate = D-glycero-alpha-D-manno-heptose 7-phosphate + D-glycero-beta-D-manno-heptose 7-phosphate. It participates in carbohydrate biosynthesis; D-glycero-D-manno-heptose 7-phosphate biosynthesis; D-glycero-alpha-D-manno-heptose 7-phosphate and D-glycero-beta-D-manno-heptose 7-phosphate from sedoheptulose 7-phosphate: step 1/1. Its function is as follows. Catalyzes the isomerization of sedoheptulose 7-phosphate in D-glycero-D-manno-heptose 7-phosphate. The polypeptide is Phosphoheptose isomerase (Klebsiella pneumoniae subsp. pneumoniae (strain ATCC 700721 / MGH 78578)).